Here is a 115-residue protein sequence, read N- to C-terminus: Large ribosomal subunit protein bL20 (115 aa).

The protein belongs to the bacterial ribosomal protein bL20 family.

In terms of biological role, binds directly to 23S ribosomal RNA and is necessary for the in vitro assembly process of the 50S ribosomal subunit. It is not involved in the protein synthesizing functions of that subunit. The sequence is that of Large ribosomal subunit protein bL20 (rplT) from Borreliella burgdorferi (strain ATCC 35210 / DSM 4680 / CIP 102532 / B31) (Borrelia burgdorferi).